The sequence spans 108 residues: Phosphoribosyl-ATP pyrophosphatase (108 aa).

It belongs to the PRA-PH family.

The protein resides in the cytoplasm. It carries out the reaction 1-(5-phospho-beta-D-ribosyl)-ATP + H2O = 1-(5-phospho-beta-D-ribosyl)-5'-AMP + diphosphate + H(+). Its pathway is amino-acid biosynthesis; L-histidine biosynthesis; L-histidine from 5-phospho-alpha-D-ribose 1-diphosphate: step 2/9. The chain is Phosphoribosyl-ATP pyrophosphatase from Thiobacillus denitrificans (strain ATCC 25259 / T1).